Here is a 162-residue protein sequence, read N- to C-terminus: Ribosomal RNA large subunit methyltransferase H (162 aa).

Residues Leu-78, Gly-109, and 128-133 (LSALTL) contribute to the S-adenosyl-L-methionine site.

This sequence belongs to the RNA methyltransferase RlmH family. As to quaternary structure, homodimer.

The protein resides in the cytoplasm. It catalyses the reaction pseudouridine(1915) in 23S rRNA + S-adenosyl-L-methionine = N(3)-methylpseudouridine(1915) in 23S rRNA + S-adenosyl-L-homocysteine + H(+). Specifically methylates the pseudouridine at position 1915 (m3Psi1915) in 23S rRNA. This chain is Ribosomal RNA large subunit methyltransferase H, found in Psychrobacter arcticus (strain DSM 17307 / VKM B-2377 / 273-4).